A 249-amino-acid polypeptide reads, in one-letter code: DnaJ homolog subfamily C member 5 homolog (249 aa).

Ser12 is modified (phosphoserine). Thr13 carries the post-translational modification Phosphothreonine. Ser14 and Ser17 each carry phosphoserine. The region spanning 15-84 is the J domain; the sequence is GDSLYEILGL…RNIYDNYGSL (70 aa). The residue at position 19 (Tyr19) is a Phosphotyrosine. Over residues 146–162 the composition is skewed to basic and acidic residues; it reads HDQYSHLNRPDGNREGN. 2 disordered regions span residues 146 to 177 and 218 to 249; these read HDQY…LEDV and PFTG…NQKY. The segment covering 227-241 has biased composition (polar residues); the sequence is NENTSLNTTEQTTYT.

In terms of processing, fatty acylated. Heavily palmitoylated in the cysteine string motif. In terms of tissue distribution, expressed in wide range of synaptic terminals: embryonic nervous system, larval neuromuscular junctions, adult visual system (neuropil of optic ganglia and terminal of R1-8 photoreceptors) and thoracic neuromuscular junctions. Also expressed in non-neuronal cells: follicle cells, spermatheca, testis and ejaculatory bulb. Low level of expression is found in many neuronal and non-neuronal tissues.

The protein resides in the membrane. May have an important role in presynaptic function. This Drosophila melanogaster (Fruit fly) protein is DnaJ homolog subfamily C member 5 homolog.